A 66-amino-acid polypeptide reads, in one-letter code: Large ribosomal subunit protein bL35 (66 aa).

Positions 1–23 are disordered; the sequence is MPKMKTHRASAKRFKRTANGGLK.

Belongs to the bacterial ribosomal protein bL35 family.

The polypeptide is Large ribosomal subunit protein bL35 (Lactobacillus helveticus (strain DPC 4571)).